We begin with the raw amino-acid sequence, 403 residues long: DNA polymerase IV (403 aa).

Positions 23–203 (IAHMDCDAFY…KPVNILPGVG (181 aa)) constitute a UmuC domain. Mg(2+) contacts are provided by Asp27 and Asp120. Glu121 is an active-site residue.

It belongs to the DNA polymerase type-Y family. Monomer. The cofactor is Mg(2+).

It localises to the cytoplasm. It carries out the reaction DNA(n) + a 2'-deoxyribonucleoside 5'-triphosphate = DNA(n+1) + diphosphate. In terms of biological role, poorly processive, error-prone DNA polymerase involved in untargeted mutagenesis. Copies undamaged DNA at stalled replication forks, which arise in vivo from mismatched or misaligned primer ends. These misaligned primers can be extended by PolIV. Exhibits no 3'-5' exonuclease (proofreading) activity. May be involved in translesional synthesis, in conjunction with the beta clamp from PolIII. The sequence is that of DNA polymerase IV from Caulobacter vibrioides (strain ATCC 19089 / CIP 103742 / CB 15) (Caulobacter crescentus).